A 133-amino-acid polypeptide reads, in one-letter code: Putative esterase TV1331 (133 aa).

It belongs to the thioesterase PaaI family.

The sequence is that of Putative esterase TV1331 from Thermoplasma volcanium (strain ATCC 51530 / DSM 4299 / JCM 9571 / NBRC 15438 / GSS1).